A 184-amino-acid chain; its full sequence is Elongation factor P (184 aa).

The protein belongs to the elongation factor P family.

It is found in the cytoplasm. It participates in protein biosynthesis; polypeptide chain elongation. Involved in peptide bond synthesis. Stimulates efficient translation and peptide-bond synthesis on native or reconstituted 70S ribosomes in vitro. Probably functions indirectly by altering the affinity of the ribosome for aminoacyl-tRNA, thus increasing their reactivity as acceptors for peptidyl transferase. This is Elongation factor P from Paracidovorax citrulli (strain AAC00-1) (Acidovorax citrulli).